The following is a 109-amino-acid chain: MKVLALPVAVAAMLLVLAQNTQSVYIQYEGFQVKLDSVKKLDELLEQPRSFRHRMGTQRDPSVLCSDPALPSDLQPVCENSQAANIFRALRSISQEDCELCINVACTGC.

The signal sequence occupies residues 1–23; the sequence is MKVLALPVAVAAMLLVLAQNTQS. Positions 24-94 are excised as a propeptide; sequence VYIQYEGFQV…NIFRALRSIS (71 aa). Cystine bridges form between C65–C78, C98–C106, and C101–C109.

Belongs to the guanylin family. In terms of tissue distribution, small and large intestine and atria and ventricles of heart. Both uroguanylin and prouroguanylin are found in plasma.

The protein resides in the secreted. In terms of biological role, endogenous activator of intestinal guanylate cyclase. It stimulates this enzyme through the same receptor binding region as the heat-stable enterotoxins. May be a potent physiological regulator of intestinal fluid and electrolyte transport. May be an autocrine/paracrine regulator of intestinal salt and water transport. This is Guanylate cyclase activator 2B (GUCA2B) from Didelphis virginiana (North American opossum).